We begin with the raw amino-acid sequence, 226 residues long: Lysoplasmalogenase TMEM86B (226 aa).

The Cytoplasmic segment spans residues M1–R23. A helical membrane pass occupies residues W24–I40. Topologically, residues P41–S46 are extracellular. The helical transmembrane segment at W47 to M67 threads the bilayer. Residues S68–Q75 lie on the Cytoplasmic side of the membrane. Residues L76–W93 form a helical membrane-spanning segment. Residues P94–G100 are Extracellular-facing. The chain crosses the membrane as a helical span at residues M101–F117. Residues S118–G123 lie on the Cytoplasmic side of the membrane. A helical membrane pass occupies residues L124–L140. Over Q141 to D146 the chain is Extracellular. The chain crosses the membrane as a helical span at residues M147–W163. Topologically, residues R164–S171 are cytoplasmic. Residues A172–W188 traverse the membrane as a helical segment. The Extracellular segment spans residues D189–H199. A helical transmembrane segment spans residues L200 to L218. The Cytoplasmic portion of the chain corresponds to R219 to D226.

The protein belongs to the TMEM86 family. In terms of assembly, homodimer.

It localises to the endoplasmic reticulum membrane. It is found in the cytoplasm. The enzyme catalyses a 1-O-(1Z-alkenyl)-sn-glycero-3-phosphocholine + H2O = a 2,3-saturated aldehyde + sn-glycerol 3-phosphocholine. The catalysed reaction is a 1-O-(1Z-alkenyl)-sn-glycero-3-phosphoethanolamine + H2O = a 2,3-saturated aldehyde + sn-glycero-3-phosphoethanolamine. Its activity is regulated as follows. Competitively inhibited by lysophosphatidic acid. Functionally, catalyzes the hydrolysis of the vinyl ether bond of choline or ethanolamine lysoplasmalogens, forming fatty aldehyde and glycerophosphocholine or glycerophosphoethanolamine, respectively and is specific for the sn-2-deacylated (lyso) form of plasmalogen. This Homo sapiens (Human) protein is Lysoplasmalogenase TMEM86B (TMEM86B).